Reading from the N-terminus, the 427-residue chain is MAVLIETTLGDLIIDLFVKERPRCSLNFLKLCKKKYYNLNQFHSIERNYVAQTGDPTGTGKGGESVYSDMYGEQGRYFEREDLPKMRHTRMGIVSFVNNGDNMLGSQFFITLGENLDYLDDQHTIFGQVTEGLETLEKLNEQLADTNNRPFKDIRISHTIVLDDPFDEDARISFPPRSPSPTYEMLVKTDQIALDEKEDEDEGKTAEEIAEELQQREMAEQAQILEMVGDLKDADEVPPENVLFVCKLNPVTTDEDLEIIFSRFGKINNCEIVRDRRSGDSLQYAFIEFDNAKSCEQAFFKMDNVLIDDRRIHVDFSQSVSQNYKYKPKSQQQEAPKRRQSPQRRPEVKRSHQRSPSPRRRRSPSPKKDKKRDYRREPARRRRSSDNHRDRDRSYRDNNRDRRDNHRDSDRDRRRHDRSPDRRRDRR.

The PPIase cyclophilin-type domain occupies 6–161 (ETTLGDLIID…KDIRISHTIV (156 aa)). Residues 195-227 (DEKEDEDEGKTAEEIAEELQQREMAEQAQILEM) are a coiled coil. The region spanning 241–319 (NVLFVCKLNP…RRIHVDFSQS (79 aa)) is the RRM domain. Positions 322–334 (QNYKYKPKSQQQE) are enriched in polar residues. Residues 322-427 (QNYKYKPKSQ…RSPDRRRDRR (106 aa)) form a disordered region. Basic residues predominate over residues 351–370 (SHQRSPSPRRRRSPSPKKDK). Residues 384–427 (SSDNHRDRDRSYRDNNRDRRDNHRDSDRDRRRHDRSPDRRRDRR) show a composition bias toward basic and acidic residues.

Belongs to the cyclophilin-type PPIase family. PPIL4 subfamily. As to quaternary structure, interacts with ama-1, the catalytic subunit of the RNA polymerase II (RNA pol II) complex. In terms of tissue distribution, ubiquitous.

It is found in the nucleus. Its subcellular location is the nucleoplasm. The protein localises to the chromosome. The catalysed reaction is [protein]-peptidylproline (omega=180) = [protein]-peptidylproline (omega=0). In terms of biological role, probable PPIase that accelerates the folding of proteins. It catalyzes the cis-trans isomerization of proline imidic peptide bonds in oligopeptides. Involved in RNA polymerase II (RNA pol II)-mediated transcription elongation, and in primary transcript splicing, including co-transcriptional trans-splicing, in association with the catalytic subunit of the RNA pol II complex ama-1. Also plays a role in the regulation of elongation-dependent phosphorylation of ama-1 to control transcription. Involved in the transcription of several genes during embryogenesis and in particular, of genes related to developmental processes such as gastrulation, and also regulates transcription in germ cells from embryogenesis to adulthood. In Caenorhabditis elegans, this protein is Peptidyl-prolyl cis-trans isomerase sig-7.